Reading from the N-terminus, the 142-residue chain is Large ribosomal subunit protein uL11 (142 aa).

The protein belongs to the universal ribosomal protein uL11 family. In terms of assembly, part of the ribosomal stalk of the 50S ribosomal subunit. Interacts with L10 and the large rRNA to form the base of the stalk. L10 forms an elongated spine to which L12 dimers bind in a sequential fashion forming a multimeric L10(L12)X complex. Post-translationally, one or more lysine residues are methylated.

Its function is as follows. Forms part of the ribosomal stalk which helps the ribosome interact with GTP-bound translation factors. The sequence is that of Large ribosomal subunit protein uL11 from Mannheimia succiniciproducens (strain KCTC 0769BP / MBEL55E).